The chain runs to 3159 residues: E1A-binding protein p400 (3159 aa).

A compositionally biased stretch (polar residues) spans 1-16 (MHHGTGPQNVQHQLQR). 7 disordered regions span residues 1-65 (MHHG…MNRS), 125-154 (SPLS…RAGA), 212-261 (PGTP…HITT), 282-359 (VLQG…PASP), 545-594 (LMPT…PQLP), 633-658 (QQPN…AQLA), and 684-770 (TRLP…SQDT). A compositionally biased stretch (pro residues) spans 31 to 41 (HPNPPPSPAAP). Residues 42 to 55 (FAPSASPSAPQSPS) are compositionally biased toward low complexity. Phosphoserine is present on Ser-53. Residues 56 to 65 (YQIQQLMNRS) show a composition bias toward polar residues. Low complexity-rich tracts occupy residues 125 to 137 (SPLS…QSPT) and 237 to 256 (LGPQ…LASP). At Ser-135 the chain carries Phosphoserine. Residues Ser-315 and Ser-321 each carry the phosphoserine modification. A compositionally biased stretch (low complexity) spans 558-571 (QAAQLAGQRQSQQQ). Polar residues predominate over residues 572 to 585 (YDPSTGPPVQNAAS). Pro residues-rich tracts occupy residues 637–653 (VPIP…PPSQ) and 689–698 (DPAPPCPRPL). The span at 699 to 711 (PTSSTSSLAPVSG) shows a compositional bias: low complexity. Composition is skewed to polar residues over residues 725–742 (NRPS…TSRT) and 751–760 (TKPQSPAQNA). Ser-736 and Ser-755 each carry phosphoserine. Residues 761–770 (TSSQDSSQDT) show a composition bias toward low complexity. The region spanning 799–871 (LPKLQEAPRP…EQSRLRRIAA (73 aa)) is the HSA domain. 2 disordered regions span residues 915–967 (ELRP…GVVD) and 997–1024 (SSQW…GDRE). 2 positions are modified to phosphoserine: Ser-928 and Ser-941. Phosphothreonine is present on Thr-945. Acidic residues-rich tracts occupy residues 945-962 (TDDE…EEAN) and 1008-1019 (EDTSGEEDADDC). Residues 951-1365 (DEEETIEEEE…NVLSILVRLQ (415 aa)) form an interactions with RUVBL1 and RUVBL2 region. The residue at position 1011 (Ser-1011) is a Phosphoserine. Residues 1103 to 1268 (AKLYRKNLNG…WTMVHFLVPG (166 aa)) form the Helicase ATP-binding domain. 1116 to 1123 (DEAGLGKT) is a binding site for ATP. The short motif at 1219 to 1222 (DEMQ) is the DEAH box-like element. The segment at 1467–1582 (VQYGQKPEGR…QAPSHAAGQS (116 aa)) is disordered. An N6-acetyllysine modification is found at Lys-1472. 2 stretches are compositionally biased toward low complexity: residues 1481-1498 (PSTH…SAAP) and 1538-1565 (PASA…ASTP). Phosphoserine is present on residues Ser-1547, Ser-1728, and Ser-1732. The tract at residues 1787–1807 (GSLDGRRGKEAGPAHSYTSSS) is disordered. The span at 1789-1798 (LDGRRGKEAG) shows a compositional bias: basic and acidic residues. One can recognise a Helicase C-terminal domain in the interval 1899–2056 (KLEALAILLQ…GNDYSMAFLT (158 aa)). Disordered regions lie at residues 2119 to 2144 (KSAQ…PCDE) and 2287 to 2311 (KERK…GEAV). Lys-2349 and Lys-2356 each carry N6-acetyllysine. A Myb-like domain is found at 2360–2429 (EPGQDNPEWL…QCRNRYENVI (70 aa)). Disordered regions lie at residues 2524–2602 (KEKK…AQPA) and 2665–2688 (TPGG…GSPA). The tract at residues 2524–2789 (KEKKALADQQ…QQQQQTTTTS (266 aa)) is interaction with ZNF42. Positions 2530-2540 (ADQQKAQQPAV) are enriched in low complexity. Pro residues-rich tracts occupy residues 2541 to 2563 (AQPP…PLPQ) and 2572 to 2589 (PAGP…PQTQ). A compositionally biased stretch (low complexity) spans 2590 to 2602 (PQPVQAPAKAQPA). Ser-2686 bears the Phosphoserine mark. Position 2813 is a phosphothreonine (Thr-2813). Disordered stretches follow at residues 2821 to 2869 (QKQK…TAPR) and 3115 to 3159 (APLQ…PPCQ). The segment covering 2828–2843 (PPQPPPPQAQSAPPQP) has biased composition (pro residues). Over residues 2844-2866 (TAQVQVQTSQPPQQQSPQLTTVT) the composition is skewed to low complexity. A compositionally biased stretch (polar residues) spans 3129-3140 (PASSDSPSQQPK).

This sequence belongs to the SNF2/RAD54 helicase family. SWR1 subfamily. As to quaternary structure, component of the NuA4 histone acetyltransferase complex which contains the catalytic subunit KAT5/TIP60 and the subunits EP400, TRRAP/PAF400, BRD8/SMAP, EPC1, DMAP1/DNMAP1, RUVBL1/TIP49, RUVBL2, ING3, actin, ACTL6A/BAF53A, MORF4L1/MRG15, MORF4L2/MRGX, MRGBP, YEATS4/GAS41, VPS72/YL1 and MEAF6. May also participate in the formation of NuA4 related complexes which lack the KAT5/TIP60 catalytic subunit, but which include the SWI/SNF related protein SRCAP. The NuA4 complex interacts with MYC and the adenovirus E1A protein. EP400 interacts with TRRAP, RUVBL1 and RUVBL2. Component of a SWR1-like complex. Interacts with ZNF42. Interacts with PHF5A. Interacts with human cytomegalovirus UL27. Interacts with human adenovirus 5 E1A protein; this interaction stabilizes MYC. In terms of tissue distribution, ubiquitously expressed.

It localises to the nucleus. In terms of biological role, component of the NuA4 histone acetyltransferase complex which is involved in transcriptional activation of select genes principally by acetylation of nucleosomal histones H4 and H2A. This modification may both alter nucleosome - DNA interactions and promote interaction of the modified histones with other proteins which positively regulate transcription. May be required for transcriptional activation of E2F1 and MYC target genes during cellular proliferation. The NuA4 complex ATPase and helicase activities seem to be, at least in part, contributed by the association of RUVBL1 and RUVBL2 with EP400. May regulate ZNF42 transcription activity. Component of a SWR1-like complex that specifically mediates the removal of histone H2A.Z/H2AZ1 from the nucleosome. This chain is E1A-binding protein p400 (EP400), found in Homo sapiens (Human).